A 1183-amino-acid chain; its full sequence is Atrophin-1 (1183 aa).

3 disordered regions span residues 1 to 603 (MKTR…ITTS), 617 to 760 (SPAG…ARFN), and 780 to 855 (LEGS…HRPP). Positions 16-32 (RKKEAPGPREELRSRGR) match the Nuclear localization signal motif. Positions 17–29 (KKEAPGPREELRS) are enriched in basic and acidic residues. Position 34 is a phosphoserine (S34). The segment covering 45–63 (GKAEKSRQTAKKARVEETS) has biased composition (basic and acidic residues). Residues S77, S79, S100, S102, and S106 each carry the phosphoserine modification. Residues 107–127 (LDGRSINDDGSSDPRDIDQDN) are compositionally biased toward basic and acidic residues. Residues 128 to 151 (RSTSPSIYSPGSVENDSDSSSGLS) are compositionally biased toward polar residues. Composition is skewed to pro residues over residues 157–173 (PYHP…PPDS) and 207–218 (GPPPGAPPPHPQ). A compositionally biased stretch (low complexity) spans 261–272 (IPISSSGASGAP). Pro residues predominate over residues 344–373 (PPGPEKGPTLAPSPHPLPPASSSAPGPPMR). A compositionally biased stretch (low complexity) spans 377–400 (SSCSSSSVAASSSSSAATSQYPAS). The span at 415 to 436 (SMSVSNQPPKYTQPSLPSQAVW) shows a compositional bias: polar residues. Residues 510–560 (HPLESSNSHHAHPYNMSPSLGSLRPYPPGPAHLPPSHGQVSYSQAGPNGPP) form an involved in binding BAIAP2 region. The segment covering 562–584 (SSSSNSSGSSSQAAYSCSHPSSS) has biased composition (low complexity). Position 625 is a phosphoserine (S625). K634 is modified (N6-acetyllysine). Phosphothreonine is present on T646. S654 is subject to Phosphoserine. T662 is subject to Phosphothreonine. Pro residues-rich tracts occupy residues 701–711 (LPPPPAAPTTG) and 732–745 (SPVP…PPPK). S732 is subject to Phosphoserine; by MAPK8. A phosphoserine mark is found at S739 and S741. The segment covering 788–832 (KRADLVEKVRREAEQRAREEKEREREREREKEREREKERELERSV) has biased composition (basic and acidic residues). The tract at residues 872-887 (DTPALRTLSEYARPHV) is required for interaction with FAT1. S889 is subject to Phosphoserine. Positions 921–940 (PAAREREREARERDLRDRLK) are disordered. The span at 922–940 (AAREREREARERDLRDRLK) shows a compositional bias: basic and acidic residues. Positions 1026 to 1034 (ALGNDPLAR) match the Nuclear export signal motif. R1108 bears the Asymmetric dimethylarginine mark. Residue K1176 forms a Glycyl lysine isopeptide (Lys-Gly) (interchain with G-Cter in SUMO2) linkage.

As to quaternary structure, interacts with NR2E1; the interaction represses the transcriptional activity of NR2E1. Interact (via its N-terminus) with FAT1 (via a C-terminal domain). Interacts with BAIAP2, WWP1, WWP2, WWP3 and RERE. Interacts (via its N-terminus) with MTG8; the interaction enhances transcriptional repression of MTG8. Interacts with PQBP1. Post-translationally, phosphorylated in vitro by MAPK8/JNK1 on Ser-732. Predominant neuronal expression, Expressed in most brain regions including striatum, hippocampus, cerebral cortex, diencephalon, brain stem and cerebellum. Highest levels in cerebellum. Also highly expressed in kidney and testis, low expression in skeletal muscle and heart.

The protein localises to the nucleus. Its subcellular location is the cytoplasm. The protein resides in the perinuclear region. It is found in the cell junction. In terms of biological role, transcriptional corepressor. Recruits NR2E1 to repress transcription. Promotes vascular smooth cell (VSMC) migration and orientation. Corepressor of MTG8 transcriptional repression. Has some intrinsic repression activity. The sequence is that of Atrophin-1 (Atn1) from Rattus norvegicus (Rat).